A 246-amino-acid polypeptide reads, in one-letter code: Probable maleylacetoacetate isomerase 1 (246 aa).

In terms of domain architecture, GST N-terminal spans 32 to 116; the sequence is TKPILYSYWP…YLEETRPQPA (85 aa). Glutathione is bound by residues 42-47, Val-88, 100-101, Gln-140, and 144-146; these read SSCSWR, DS, and NVS. The 121-residue stretch at 121-241 folds into the GST C-terminal domain; it reads DPVKRAKIRE…HPSTQPDCPP (121 aa).

The protein belongs to the GST superfamily. Zeta family. The cofactor is glutathione.

The protein localises to the cytoplasm. It carries out the reaction 4-maleylacetoacetate = 4-fumarylacetoacetate. The catalysed reaction is RX + glutathione = an S-substituted glutathione + a halide anion + H(+). Its pathway is amino-acid degradation; L-phenylalanine degradation; acetoacetate and fumarate from L-phenylalanine: step 5/6. Catalyzes the glutathione dependent oxygenation of dichloroacetic acid to glyoxylic acid in vitro. Possesses low glutathione thioltransferase activity toward 4-hydroxynonenal (4-HNE). Has no glutathione thioltransferase activity with adrenochrome, phenethyl isothiocyanate (PEITC), 5-hydroperoxyeicosatetraenoic acid ((5S)-HpETE), prostaglandin A2 (PGA2) or 2-hydroxyethyldisulfide (HED). In Drosophila melanogaster (Fruit fly), this protein is Probable maleylacetoacetate isomerase 1 (GstZ1).